A 510-amino-acid polypeptide reads, in one-letter code: Beta-glucosidase 12 (510 aa).

An N-terminal signal peptide occupies residues 1-24 (MAAAGAMPGGLLLTFLLLAVVASG). Gln-53 contributes to the a beta-D-glucoside binding site. The N-linked (GlcNAc...) asparagine glycan is linked to Asn-122. Residues His-157 and 202-203 (NE) each bind a beta-D-glucoside. The active-site Proton donor is Glu-203. 2 cysteine pairs are disulfide-bonded: Cys-208-Cys-243 and Cys-222-Cys-230. Asn-229 carries N-linked (GlcNAc...) asparagine glycosylation. Tyr-346 contacts a beta-D-glucoside. 2 N-linked (GlcNAc...) asparagine glycosylation sites follow: Asn-361 and Asn-371. Glu-417 contributes to the a beta-D-glucoside binding site. The active-site Nucleophile is the Glu-417. A glycan (N-linked (GlcNAc...) asparagine) is linked at Asn-425. A beta-D-glucoside-binding positions include Trp-466, 473–474 (EW), and Phe-482.

The protein belongs to the glycosyl hydrolase 1 family.

The protein localises to the secreted. The enzyme catalyses Hydrolysis of terminal, non-reducing beta-D-glucosyl residues with release of beta-D-glucose.. Hydrolyzes p-nitrophenyl beta-D-glucoside, p-nitrophenyl beta-D-galactoside, p-nitrophenyl beta-D-xyloside, p-nitrophenyl beta-D-fucoside, p-nitrophenyl beta-L-arabinoside, cello-oligosaccharides and laminaribiose. In Oryza sativa subsp. indica (Rice), this protein is Beta-glucosidase 12.